We begin with the raw amino-acid sequence, 335 residues long: Probable G-protein coupled receptor 174 (335 aa).

Topologically, residues 1–27 are extracellular; sequence MTDNFTCNKTDGDNTDFRYFIYAVTYT. N-linked (GlcNAc...) asparagine glycans are attached at residues Asn-4 and Asn-8. The chain crosses the membrane as a helical span at residues 28 to 48; sequence VILVPGLIGNILALWVFYGYM. Topologically, residues 49–53 are cytoplasmic; the sequence is KETKR. A helical membrane pass occupies residues 54–74; the sequence is AVVFMINLAIADLLQILSLPL. The Extracellular portion of the chain corresponds to 75-91; the sequence is RIFYYLNHDWPFGPGLC. A disulfide bridge connects residues Cys-91 and Cys-168. A helical transmembrane segment spans residues 92-112; the sequence is MFCFYLKYVNMYASIYFLVCI. Over 113–134 the chain is Cytoplasmic; that stretch reads SVRRFWFLMYPFRFNDCKQKYD. Residues 135-155 form a helical membrane-spanning segment; the sequence is LYISIIGWLIICLACLLFPLL. Topologically, residues 156 to 182 are extracellular; sequence RTNDDTPGNRTKCFVDLPIRNVNLAQS. The N-linked (GlcNAc...) asparagine glycan is linked to Asn-164. The chain crosses the membrane as a helical span at residues 183 to 203; the sequence is VAMITIGEVVGFVTPLMIVLY. Residues 204–231 are Cytoplasmic-facing; sequence CTWKTALSLQNKYPISQHLGEKKKALKM. The chain crosses the membrane as a helical span at residues 232-252; it reads ILTCAGVFLVCFVPYHFSFPL. The Extracellular portion of the chain corresponds to 253–268; sequence DFLVKSNEIKSCFARR. A helical transmembrane segment spans residues 269 to 289; the sequence is VILIFHSVALCLASLNSCLDP. Topologically, residues 290 to 335 are cytoplasmic; the sequence is VIYYFTTNEFRRRLSRQDLPDNIQLHTKSYKIASNHATSTVAAELC.

Belongs to the G-protein coupled receptor 1 family. As to quaternary structure, interacts with GNA13. Interacts with CCL21. As to expression, expressed in spleen and, at low levels, in brain. Highly expressed in developing and mature regulatory T-cells.

The protein resides in the cell membrane. Functionally, G-protein-coupled receptor of lysophosphatidylserine (LysoPS) that plays different roles in immune response. Plays a negative role in regulatory T-cell accumulation and homeostasis. Under inflammatory conditions where LysoPS production increases, contributes to the down-regulation of regulatory T-cell activity to favor effector response. Mediates the suppression of IL-2 production in activated T-lymphocytes leading to inhibition of growth, proliferation and differentiation of T-cells. Mechanistically, acts via G(s)-containing heterotrimeric G proteins to trigger elevated cyclic AMP levels and protein kinase A/PKA activity, which may in turn act to antagonize proximal TCR signaling. Plays an important role in the initial period of sepsis through the regulation of macrophage polarization and pro- and anti-inflammatory cytokine secretions. Upon testosterone treatment, acts as a receptor for CCL21 and subsequently triggers through G(q)-alpha and G(12)/G(13) proteins a calcium flux leading to chemotactic effects on activated B-cells. Signals via GNA13 and PKA to promote CD86 up-regulation by follicular B-cells. This chain is Probable G-protein coupled receptor 174 (Gpr174), found in Mus musculus (Mouse).